The primary structure comprises 310 residues: Nucleotide-binding protein BAD_0837 (310 aa).

31 to 38 (GMSGAGRS) provides a ligand contact to ATP. 82–85 (DVRS) provides a ligand contact to GTP.

This sequence belongs to the RapZ-like family.

Functionally, displays ATPase and GTPase activities. The protein is Nucleotide-binding protein BAD_0837 of Bifidobacterium adolescentis (strain ATCC 15703 / DSM 20083 / NCTC 11814 / E194a).